Reading from the N-terminus, the 105-residue chain is Large ribosomal subunit protein uL24 (105 aa).

This sequence belongs to the universal ribosomal protein uL24 family. Part of the 50S ribosomal subunit.

Its function is as follows. One of two assembly initiator proteins, it binds directly to the 5'-end of the 23S rRNA, where it nucleates assembly of the 50S subunit. In terms of biological role, one of the proteins that surrounds the polypeptide exit tunnel on the outside of the subunit. This Mycolicibacterium smegmatis (strain ATCC 700084 / mc(2)155) (Mycobacterium smegmatis) protein is Large ribosomal subunit protein uL24.